The following is a 704-amino-acid chain: MAKITKTFQYGKHTVTLETGEIARQAGGAVIVKVDDTVLLVTAVAAKSAREGQDFFPLTVDYQEKFYAGGRIPGGFFKREGRATEKETLISRLIDRPIRPLFPEDYKNEVQIIATVMSMNPDIDGDIAALIGASAALSLAGTPFKGPIGAAKVGYKNGEYILNPTVTELKDSQLELVVAGTANAVLMVESEAELLSEEVMLGAVTFGHREMQKVINVINELTVEAGTKPSDWVAPAKNDGMIAALKEAVGDQLASAFQVRDKLQRRDAISAIKKDVLGALAPRATIEGWAAGDLAKEFGELEYQTMRGSVLSTKVRIDGRALDTVRPISATAGVLPRTHGSALFTRGETQAIVITTLGTARDGQVIDAVSGEYKENFLFHYNFPPYSVGECGRFGAPKRREIGHGRLAKRGVLAVMPTLEEFPYTIRVVSEITESNGSSSMASVCGSSLALMDAGVPIKAPVAGIAMGLVKEGNDFVVLSDILGDEDHLGDMDFKVAGTAEGVSALQMDIKIEGITEEIMKQALQQAKAGRLHILGEMAHALTTPRQELSDYAPRLLTIKIHPDKIREVIGKGGSTIQAITKETGTQIDIQDDGTIIIASVNAIAAQAAKSRIEQITSDVEPGRIYEGKVAKIMDFGAFVTILPGKDGLVHVSQISSERVEKVGDKLKEGDLVRVKVLEVDKQGRIRLSIKAVEEGEGVQASAE.

The Mg(2+) site is built by Asp-487 and Asp-493. The 60-residue stretch at 554–613 (PRLLTIKIHPDKIREVIGKGGSTIQAITKETGTQIDIQDDGTIIIASVNAIAAQAAKSRI) folds into the KH domain. One can recognise an S1 motif domain in the interval 623–691 (GRIYEGKVAK…KQGRIRLSIK (69 aa)).

This sequence belongs to the polyribonucleotide nucleotidyltransferase family. In terms of assembly, component of the RNA degradosome, which is a multiprotein complex involved in RNA processing and mRNA degradation. Mg(2+) is required as a cofactor.

It localises to the cytoplasm. The catalysed reaction is RNA(n+1) + phosphate = RNA(n) + a ribonucleoside 5'-diphosphate. In terms of biological role, involved in mRNA degradation. Catalyzes the phosphorolysis of single-stranded polyribonucleotides processively in the 3'- to 5'-direction. This Xanthomonas axonopodis pv. citri (strain 306) protein is Polyribonucleotide nucleotidyltransferase.